The chain runs to 201 residues: MKNPIIDNIPCVLLAGGKSSRFTINNIQINKALMPLKSYSSLLEYQYTRLLKLFKQVIISAKKSYELNAPYLLEKESGLFSPLFGIHNAFLTLQTPYIFFIPIDAPLVSFESIKALCGIENFSVVYAKSPTKEHYLISLWHKSTLNALNYTLKTQNYRLSDLVKNTSSVAIHFNQEEEFLNLNTLKDYELAVQILKKRANG.

GTP contacts are provided by residues 14–16 (LAG), Lys31, and Asp104. Mg(2+) is bound at residue Asp104.

It belongs to the MobA family. Monomer. Mg(2+) is required as a cofactor.

It is found in the cytoplasm. It carries out the reaction Mo-molybdopterin + GTP + H(+) = Mo-molybdopterin guanine dinucleotide + diphosphate. Transfers a GMP moiety from GTP to Mo-molybdopterin (Mo-MPT) cofactor (Moco or molybdenum cofactor) to form Mo-molybdopterin guanine dinucleotide (Mo-MGD) cofactor. The polypeptide is Molybdenum cofactor guanylyltransferase (Helicobacter pylori (strain P12)).